The following is a 351-amino-acid chain: Prostaglandin reductase 2 (351 aa).

99–100 (FY) contacts substrate. Residues 165-168 (GACG), K192, Y208, N231, 253-259 (CGQISQY), 287-289 (FLV), and N337 contribute to the NADP(+) site. 288-290 (LVL) provides a ligand contact to substrate.

This sequence belongs to the NADP-dependent oxidoreductase L4BD family. As to quaternary structure, monomer.

Its subcellular location is the cytoplasm. It carries out the reaction 13,14-dihydro-15-oxo-prostaglandin E2 + NAD(+) = 15-oxoprostaglandin E2 + NADH + H(+). It catalyses the reaction 13,14-dihydro-15-oxo-prostaglandin E2 + NADP(+) = 15-oxoprostaglandin E2 + NADPH + H(+). The catalysed reaction is 13,14-dihydro-15-oxo-PGF2alpha + NADP(+) = 15-oxoprostaglandin F2alpha + NADPH + H(+). The enzyme catalyses 13,14-dihydro-15-oxo-prostaglandin E1 + NADP(+) = 15-oxoprostaglandin E1 + NADPH + H(+). It carries out the reaction 13,14-dihydro-15-oxo-prostaglandin F1alpha + NADP(+) = 15-oxoprostaglandin F1alpha + NADPH + H(+). Functions as 15-oxo-prostaglandin 13-reductase and acts on 15-keto-PGE1, 15-keto-PGE2, 15-keto-PGE1-alpha and 15-keto-PGE2-alpha with highest activity towards 15-keto-PGE2. Overexpression represses transcriptional activity of PPARG and inhibits adipocyte differentiation. This is Prostaglandin reductase 2 (PTGR2) from Bos taurus (Bovine).